The primary structure comprises 1043 residues: Protein translocase subunit SecA (1043 aa).

ATP is bound by residues glutamine 143, 161–165, and aspartate 665; that span reads GEGKT. Positions 980-1005 are enriched in low complexity; sequence ATAAPAAETTTTAKAADAARQQPPAA. Residues 980–1043 form a disordered region; it reads ATAAPAAETT…KYKHCHGRNA (64 aa). A compositionally biased stretch (basic and acidic residues) spans 1008 to 1022; sequence EEQKRQPVHVEKTPG. Residues cysteine 1027, cysteine 1029, cysteine 1038, and histidine 1039 each coordinate Zn(2+). Over residues 1033–1043 the composition is skewed to basic residues; the sequence is KKYKHCHGRNA.

This sequence belongs to the SecA family. In terms of assembly, monomer and homodimer. Part of the essential Sec protein translocation apparatus which comprises SecA, SecYEG and auxiliary proteins SecDF. Other proteins may also be involved. Zn(2+) is required as a cofactor.

It localises to the cell inner membrane. It is found in the cytoplasm. The catalysed reaction is ATP + H2O + cellular proteinSide 1 = ADP + phosphate + cellular proteinSide 2.. Its function is as follows. Part of the Sec protein translocase complex. Interacts with the SecYEG preprotein conducting channel. Has a central role in coupling the hydrolysis of ATP to the transfer of proteins into and across the cell membrane, serving as an ATP-driven molecular motor driving the stepwise translocation of polypeptide chains across the membrane. The chain is Protein translocase subunit SecA from Chloroherpeton thalassium (strain ATCC 35110 / GB-78).